Consider the following 166-residue polypeptide: Signal peptidase complex catalytic subunit SEC11 (166 aa).

The Cytoplasmic segment spans residues 1 to 9 (MNIRQQITQ). A helical; Signal-anchor for type II membrane protein transmembrane segment spans residues 10 to 30 (FLSLAYVFSSAFMLWKTLSVI). The Lumenal portion of the chain corresponds to 31–166 (ANSHSPIVVV…LGLSSLFSNE (136 aa)). Catalysis depends on charge relay system residues Ser44, His83, and Asp108. Positions 152 to 163 (GMLGLLGLSSLF) are C-terminal short (CTS) helix.

The protein belongs to the peptidase S26B family. As to quaternary structure, component of the signal peptidase complex (SPC) composed of a catalytic subunit SEC11 and three accessory subunits SPC1, SPC2 and SPC3. The complex induces a local thinning of the ER membrane which is used to measure the length of the signal peptide (SP) h-region of protein substrates. This ensures the selectivity of the complex towards h-regions shorter than 18-20 amino acids. SPC associates with the translocon complex.

It is found in the endoplasmic reticulum membrane. The enzyme catalyses Cleavage of hydrophobic, N-terminal signal or leader sequences from secreted and periplasmic proteins.. Its function is as follows. Catalytic component of the signal peptidase complex (SPC) which catalyzes the cleavage of N-terminal signal sequences from nascent proteins as they are translocated into the lumen of the endoplasmic reticulum. Specifically cleaves N-terminal signal peptides that contain a hydrophobic alpha-helix (h-region) shorter than 18-20 amino acids. This Candida albicans (strain SC5314 / ATCC MYA-2876) (Yeast) protein is Signal peptidase complex catalytic subunit SEC11 (SEC11).